Reading from the N-terminus, the 238-residue chain is Ribosomal RNA small subunit methyltransferase G (238 aa).

S-adenosyl-L-methionine contacts are provided by residues glycine 78, alanine 129–glutamate 130, and arginine 148.

The protein belongs to the methyltransferase superfamily. RNA methyltransferase RsmG family.

It localises to the cytoplasm. Specifically methylates the N7 position of a guanine in 16S rRNA. This chain is Ribosomal RNA small subunit methyltransferase G, found in Caldicellulosiruptor bescii (strain ATCC BAA-1888 / DSM 6725 / KCTC 15123 / Z-1320) (Anaerocellum thermophilum).